We begin with the raw amino-acid sequence, 224 residues long: MDQFIKQDETGDLIETGMNVANHFLSAPIQGTNSLSKATIIPGVAPVLIGNPEQKNIQYPTASHQGSKSKGRGSGAKPIIVSSSEGGTGGTQIPEPLFAQTGQGGVVTTVYQDPTIQPTGSYRSVELAKIGKERMINRFVEKPRTSTPVTEFKRGAGNGSPRPDNPRGGHRREWSLSWVQGEVRVFEWCNPICSPITAAARFHSCKCGNCPAKCDQCERDYGPP.

Disordered regions lie at residues 57-98 (IQYP…EPLF) and 144-172 (RTSTPVTEFKRGAGNGSPRPDNPRGGHRR). Zn(2+)-binding residues include H170, C189, C193, C205, C207, C210, C214, and C217.

It belongs to the paramyxoviruses V protein family. In terms of assembly, interacts with host IFIH1/MDA5 and DHX58/LGP2. Forms with host DDB1, CUL4A, STAT1, STAT2 and STAT3 the mumps virus V-dependent complex (VDC).

It localises to the virion. The protein localises to the host cytoplasm. Its function is as follows. Plays an essential role in the inhibition of host immune response. Prevents the establishment of cellular antiviral state by blocking interferon-alpha/beta (IFN-alpha/beta) production and signaling pathway. Interacts with host IFIH1/MDA5 and DHX58/LGP2 to inhibit the transduction pathway involved in the activation of IFN-beta promoter, thus protecting the virus against cell antiviral state. Blocks the type I and II interferon signaling pathways by interacting with host STAT1, STAT2 and STAT3, and mediating their ubiquitination and subsequent proteasomal degradation. The polypeptide is Non-structural protein V (Mumps virus genotype N (strain L-Zagreb vaccine) (MuV)).